The sequence spans 258 residues: UPF0246 protein CKO_03380 (258 aa).

Belongs to the UPF0246 family.

The sequence is that of UPF0246 protein CKO_03380 from Citrobacter koseri (strain ATCC BAA-895 / CDC 4225-83 / SGSC4696).